Consider the following 127-residue polypeptide: Fluoride-specific ion channel FluC (127 aa).

The next 4 helical transmembrane spans lie at 4–24 (LLLV…VGVG), 36–56 (GTFT…SWLA), 72–92 (VGVL…ALMI), and 101–121 (FTYS…GLLV). Residues Gly-76 and Thr-79 each coordinate Na(+).

This sequence belongs to the fluoride channel Fluc/FEX (TC 1.A.43) family.

The protein resides in the cell inner membrane. The enzyme catalyses fluoride(in) = fluoride(out). With respect to regulation, na(+) is not transported, but it plays an essential structural role and its presence is essential for fluoride channel function. In terms of biological role, fluoride-specific ion channel. Important for reducing fluoride concentration in the cell, thus reducing its toxicity. This chain is Fluoride-specific ion channel FluC, found in Caulobacter vibrioides (strain ATCC 19089 / CIP 103742 / CB 15) (Caulobacter crescentus).